Here is a 49-residue protein sequence, read N- to C-terminus: uncharacterized protein (49 aa).

This is an uncharacterized protein from Escherichia coli (Bacteriophage T4).